The sequence spans 301 residues: Epimerase family protein Mb2239 (301 aa).

This sequence belongs to the NAD(P)-dependent epimerase/dehydratase family. SDR39U1 subfamily.

This is Epimerase family protein Mb2239 from Mycobacterium bovis (strain ATCC BAA-935 / AF2122/97).